A 449-amino-acid polypeptide reads, in one-letter code: G-protein coupled receptor 61 (449 aa).

Residues 1–14 (MESSPIPQSSGNSS) are compositionally biased toward low complexity. The segment at 1-29 (MESSPIPQSSGNSSTLGRALQTPGPSTAS) is disordered. The Extracellular segment spans residues 1–44 (MESSPIPQSSGNSSTLGRALQTPGPSTASGVPELGLRDVASESV). Asn-12 is a glycosylation site (N-linked (GlcNAc...) asparagine). A helical membrane pass occupies residues 45 to 67 (ALFFMLLLDLTAVAGNAAVMAVI). The Cytoplasmic portion of the chain corresponds to 68–75 (AKTPALRK). The chain crosses the membrane as a helical span at residues 76–98 (FVFVFHLCLVDLLAALTLMPLAM). Topologically, residues 99–112 (LSSSALFDHALFGE) are extracellular. The helical transmembrane segment at 113-135 (VACRLYLFLSVCFVSLAILSVSA) threads the bilayer. At 136–155 (INVERYYYVVHPMRYEVRMT) the chain is on the cytoplasmic side. A helical transmembrane segment spans residues 156 to 178 (LGLVASVLVGVWVKALAMASVPV). Over 179–206 (LGRVYWEEGAPSVNPGCSLQWSHSAYCQ) the chain is Extracellular. Residues 207–229 (LFVVVFAVLYFLLPLILIFVVYC) traverse the membrane as a helical segment. The Cytoplasmic segment spans residues 230-287 (SMFRVARVAAMQHGPLPTWMETPRQRSESLSSRSTMVTSSGAHQTTPHRTFGGGKAAV). Residues 288-310 (VLLAVGGQFLLCWLPYFSFHLYV) traverse the membrane as a helical segment. Over 311-324 (ALSAQPISAGQVEN) the chain is Extracellular. Residues 325–344 (VVTWIGYFCFTSNPFFYGCL) form a helical membrane-spanning segment. Topologically, residues 345–449 (NRQIRGELSK…RPAPSPRLES (105 aa)) are cytoplasmic.

The protein belongs to the G-protein coupled receptor 1 family. In terms of assembly, forms heterodimer with MTNR1B. Interacts with ARRB1 and ARRB2 in a spontaneous and agonist-independent manner; leading to the internalization of GPR61 in the endosomal compartment. In terms of tissue distribution, predominantly expressed in the brain and testes, with relatively lower expression observed in the eye, adrenal gland and pituitary gland.

Its subcellular location is the cell membrane. It is found in the endosome membrane. Functionally, orphan G-protein coupled receptor. Constitutively activates the G(s)-alpha/cAMP signaling pathway. Shows a reciprocal regulatory interaction with the melatonin receptor MTNR1B most likely through receptor heteromerization. May be involved in the regulation of food intake and body weight. The protein is G-protein coupled receptor 61 (Gpr61) of Mus musculus (Mouse).